Reading from the N-terminus, the 299-residue chain is Ribosomal RNA small subunit methyltransferase H (299 aa).

S-adenosyl-L-methionine is bound by residues 32 to 34, aspartate 52, phenylalanine 79, aspartate 100, and glutamine 107; that span reads AGH.

Belongs to the methyltransferase superfamily. RsmH family.

It localises to the cytoplasm. It carries out the reaction cytidine(1402) in 16S rRNA + S-adenosyl-L-methionine = N(4)-methylcytidine(1402) in 16S rRNA + S-adenosyl-L-homocysteine + H(+). Its function is as follows. Specifically methylates the N4 position of cytidine in position 1402 (C1402) of 16S rRNA. The polypeptide is Ribosomal RNA small subunit methyltransferase H (Mycoplasmopsis pulmonis (strain UAB CTIP) (Mycoplasma pulmonis)).